A 504-amino-acid polypeptide reads, in one-letter code: Protein Dok-7 (504 aa).

The 106-residue stretch at 4–109 (AALVEGQVKL…WDTRIRYALG (106 aa)) folds into the PH domain. Positions 105-210 (RYALGEVHRF…RGISPTKGPF (106 aa)) constitute an IRS-type PTB domain. 3 disordered regions span residues 210-232 (FGLR…ERVA), 248-348 (LSHS…HSSY), and 371-483 (SLLS…PHAG). Low complexity predominate over residues 263-280 (LSSSSSEASHSDISASSR). 3 stretches are compositionally biased toward polar residues: residues 285-297 (PEQS…TSQE), 331-341 (GRQSSSDSGIA), and 421-430 (PASQGSSDHG).

As to quaternary structure, homodimer. Forms a heterotetramer composed of 2 DOK7 and 2 MUSK molecules which facilitates MUSK trans-autophosphorylation on tyrosine residue and activation. Interacts (via IRS-type PTB domain) with MUSK (via cytoplasmic part); requires MUSK phosphorylation.

The protein localises to the cell membrane. It is found in the synapse. Probable muscle-intrinsic activator of MUSK that plays an essential role in neuromuscular synaptogenesis. Acts in aneural activation of MUSK and subsequent acetylcholine receptor (AchR) clustering in myotubes. Induces autophosphorylation of MUSK. The chain is Protein Dok-7 (Dok7) from Mus musculus (Mouse).